The chain runs to 49 residues: Large ribosomal subunit protein bL36 (49 aa).

It belongs to the bacterial ribosomal protein bL36 family.

In Pseudomonas fluorescens (strain ATCC BAA-477 / NRRL B-23932 / Pf-5), this protein is Large ribosomal subunit protein bL36.